The following is a 679-amino-acid chain: Biosynthetic arginine decarboxylase (679 aa).

Residues 1–43 are disordered; sequence MKHRGQEEMGVESTATSDEVVKVPANGNKLEGKNHKQKKLLPT. K149 is subject to N6-(pyridoxal phosphate)lysine. 331–341 is a substrate binding site; that stretch reads LDVGGGLGVDY.

Belongs to the Orn/Lys/Arg decarboxylase class-II family. SpeA subfamily. Mg(2+) is required as a cofactor. Requires pyridoxal 5'-phosphate as cofactor.

It catalyses the reaction L-arginine + H(+) = agmatine + CO2. In terms of biological role, catalyzes the biosynthesis of agmatine from arginine. The chain is Biosynthetic arginine decarboxylase from Nostoc sp. (strain PCC 7120 / SAG 25.82 / UTEX 2576).